We begin with the raw amino-acid sequence, 123 residues long: MALKDTAKKMKDLLDSIQHDLAKAEKGNKAAAQRVRTDSIKLEKVAKLYRKESIKAEKSGLLKRKPSTKAPAKVKKTAEKKAPKKSSAAAAKTSKAVKASKPASKKTAAKKVKKPSKARGFRK.

A disordered region spans residues 54–123 (IKAEKSGLLK…KPSKARGFRK (70 aa)). Positions 61 to 75 (LLKRKPSTKAPAKVK) are enriched in basic residues. Low complexity predominate over residues 85-102 (KSSAAAAKTSKAVKASKP). Basic residues predominate over residues 103 to 123 (ASKKTAAKKVKKPSKARGFRK).

Belongs to the histone H1/H5 family. HCT subfamily.

Its function is as follows. Might have a role analogous to that of eukaryotic histone proteins. The sequence is that of Histone H1-like protein HC1 (hctA) from Chlamydia pneumoniae (Chlamydophila pneumoniae).